The chain runs to 650 residues: Chaperone protein DnaK (650 aa).

The residue at position 200 (threonine 200) is a Phosphothreonine; by autocatalysis. Over residues 611-636 the composition is skewed to low complexity; sequence AQQAGAAGAAGAAAEGASAQGGAQPA. The segment at 611–650 is disordered; that stretch reads AQQAGAAGAAGAAAEGASAQGGAQPADDVVDADFKEVKKD.

The protein belongs to the heat shock protein 70 family.

In terms of biological role, acts as a chaperone. The chain is Chaperone protein DnaK from Burkholderia mallei (strain NCTC 10247).